A 112-amino-acid polypeptide reads, in one-letter code: Transcriptional regulator ClgR (112 aa).

The HTH cro/C1-type domain maps to 13–67; the sequence is LRGARMSQGRTLREVSDSARVSLGYLSEIERGRKEPSSELLSAICTALQLPLSVV. Residues 24 to 43 constitute a DNA-binding region (H-T-H motif); it reads LREVSDSARVSLGYLSEIER.

Functionally, key stress-response regulator that plays an important role in multiple regulatory networks in response to different stress conditions. Required to manage host-derived stress during infection. Plays a role during hypoxia and reaeration. Controls the expression of many genes involved in heat shock, virulence, lipid metabolism, transport or regulation, including clpP1, clpP2, clpC1, hsp, groES, otsA, pknD, prcA and prcB. May function by protecting intracellular redox potential and by inducing the expression of trehalose, a constituent of cell walls that is important for defense against cell-surface and oxidative stress. Also performs different functions during stress response and is important for the pathogenicity of M.tuberculosis in vivo, regardless of the induction of the Clp proteolytic pathway. May directly activate SigE and/or SigH. This is Transcriptional regulator ClgR (clgR) from Mycobacterium tuberculosis (strain CDC 1551 / Oshkosh).